Reading from the N-terminus, the 170-residue chain is Adenine phosphoribosyltransferase (170 aa).

Belongs to the purine/pyrimidine phosphoribosyltransferase family. Homodimer.

It localises to the cytoplasm. The enzyme catalyses AMP + diphosphate = 5-phospho-alpha-D-ribose 1-diphosphate + adenine. It participates in purine metabolism; AMP biosynthesis via salvage pathway; AMP from adenine: step 1/1. In terms of biological role, catalyzes a salvage reaction resulting in the formation of AMP, that is energically less costly than de novo synthesis. This Flavobacterium johnsoniae (strain ATCC 17061 / DSM 2064 / JCM 8514 / BCRC 14874 / CCUG 350202 / NBRC 14942 / NCIMB 11054 / UW101) (Cytophaga johnsonae) protein is Adenine phosphoribosyltransferase.